Here is a 145-residue protein sequence, read N- to C-terminus: Bacilliredoxin GK2368 (145 aa).

This sequence belongs to the bacilliredoxin family.

The sequence is that of Bacilliredoxin GK2368 from Geobacillus kaustophilus (strain HTA426).